Consider the following 189-residue polypeptide: UPF0200 protein Smar_1234 (189 aa).

An ATP-binding site is contributed by 10–17 (GMPGAGKS).

It belongs to the UPF0200 family.

In Staphylothermus marinus (strain ATCC 43588 / DSM 3639 / JCM 9404 / F1), this protein is UPF0200 protein Smar_1234.